The following is a 1512-amino-acid chain: MAAAAGNRASSSGFPGARATSPEAGGGGGALKASSAPAAAAGLLREAGSGGRERADWRRRQLRKVRSVELDQLPEQPLFLAASPPASSTSPSPEPADAAGSGTGFQPVAVPPPHGAASRGGAHLTESVAAPDSGASSPAAAEPGEKRAPAAEPSPAAAPAGREMENKETLKGLHKMDDRPEERMIREKLKATCMPAWKHEWLERRNRRGPVVVKPIPVKGDGSEMNHLAAESPGEVQASAASPASKGRRSPSPGNSPSGRTVKSESPGVRRKRVSPVPFQSGRITPPRRAPSPDGFSPYSPEETNRRVNKVMRARLYLLQQIGPNSFLIGGDSPDNKYRVFIGPQNCSCARGTFCIHLLFVMLRVFQLEPSDPMLWRKTLKNFEVESLFQKYHSRRSSRIKAPSRNTIQKFVSRMSNSHTLSSSSTSTSSSENSIKDEEEQMCPICLLGMLDEESLTVCEDGCRNKLHHHCMSIWAEECRRNREPLICPLCRSKWRSHDFYSHELSSPVDSPSSLRAAQQQTVQQQPLAGSRRNQESNFNLTHYGTQQIPPAYKDLAEPWIQVFGMELVGCLFSRNWNVREMALRRLSHDVSGALLLANGESTGNSGGSSGSSPSGGATSGSSQTSISGDVVEACCSVLSMVCADPVYKVYVAALKTLRAMLVYTPCHSLAERIKLQRLLQPVVDTILVKCADANSRTSQLSISTLLELCKGQAGELAVGREILKAGSIGIGGVDYVLNCILGNQTESNNWQELLGRLCLIDRLLLEFPAEFYPHIVSTDVSQAEPVEIRYKKLLSLLTFALQSIDNSHSMVGKLSRRIYLSSARMVTTVPHVFSKLLEMLSVSSSTHFTRMRRRLMAIADEVEIAEAIQLGVEDTLDGQQDSFLQASVPNNYLETTENSSPECTVHLEKTGKGLCATKLSASSEDISERLASISVGPSSSTTTTTTTTEQPKPMVQTKGRPHSQCLNSSPLSHHSQLMFPALSTPSSSTPSVPAGTATDVSKHRLQGFIPCRIPSASPQTQRKFSLQFHRNCPENKDSDKLSPVFTQSRPLPSSNIHRPKPSRPTPGNTSKQGDPSKNSMTLDLNSSSKCDDSFGCSSNSSNAVIPSDETVFTPVEEKCRLDVNTELNSSIEDLLEASMPSSDTTVTFKSEVAVLSPEKAENDDTYKDDVNHNQKCKEKMEAEEEEALAIAMAMSASQDALPIVPQLQVENGEDIIIIQQDTPETLPGHTKAKQPYREDTEWLKGQQIGLGAFSSCYQAQDVGTGTLMAVKQVTYVRNTSSEQEEVVEALREEIRMMSHLNHPNIIRMLGATCEKSNYNLFIEWMAGGSVAHLLSKYGAFKESVVINYTEQLLRGLSYLHENQIIHRDVKGANLLIDSTGQRLRIADFGAAARLASKGTGAGEFQGQLLGTIAFMAPEVLRGQQYGRSCDVWSVGCAIIEMACAKPPWNAEKHSNHLALIFKIASATTAPSIPSHLSPGLRDVALRCLELQPQDRPPSRELLKHPVFRTTW.

Positions 1 to 13 (MAAAAGNRASSSG) are enriched in low complexity. Disordered stretches follow at residues 1-37 (MAAA…SSAP), 67-181 (SVEL…DRPE), and 213-304 (VKPI…PEET). A2 carries the N-acetylalanine modification. A phosphoserine mark is found at S21 and S35. Composition is skewed to low complexity over residues 81–99 (AASP…ADAA), 129–142 (AAPD…AAAE), and 150–160 (AAEPSPAAAPA). A phosphoserine mark is found at S137 and S154. A compositionally biased stretch (basic and acidic residues) spans 162–181 (REMENKETLKGLHKMDDRPE). Residues 250–260 (SPSPGNSPSGR) show a composition bias toward low complexity. S275 is subject to Phosphoserine. Position 285 is a phosphothreonine (T285). S292, S297, and S300 each carry phosphoserine. An SWIM-type zinc finger spans residues 338–366 (YRVFIGPQNCSCARGTFCIHLLFVMLRVF). Over residues 416-433 (SNSHTLSSSSTSTSSSEN) the composition is skewed to low complexity. The interval 416–436 (SNSHTLSSSSTSTSSSENSIK) is disordered. Residues 443–492 (CPICLLGMLDEESLTVCEDGCRNKLHHHCMSIWAEECRRNREPLICPLCR) form an RING-type zinc finger. Phosphoserine occurs at positions 507 and 531. Disordered stretches follow at residues 511-532 (SPSS…AGSR) and 602-624 (STGN…GSSQ). The segment covering 611–624 (GSSPSGGATSGSSQ) has biased composition (low complexity). S923 bears the Phosphoserine mark. A disordered region spans residues 933–972 (SISVGPSSSTTTTTTTTEQPKPMVQTKGRPHSQCLNSSPL). Positions 939–949 (SSSTTTTTTTT) are enriched in low complexity. S1018 carries the post-translational modification Phosphoserine. Residues 1032–1041 (NCPENKDSDK) show a composition bias toward basic and acidic residues. The disordered stretch occupies residues 1032–1087 (NCPENKDSDKLSPVFTQSRPLPSSNIHRPKPSRPTPGNTSKQGDPSKNSMTLDLNS). S1043 carries the phosphoserine modification. Polar residues-rich tracts occupy residues 1045-1057 (VFTQ…SSNI) and 1066-1087 (TPGN…DLNS). Residues 1243-1508 (WLKGQQIGLG…SRELLKHPVF (266 aa)) enclose the Protein kinase domain. Residues 1249–1257 (IGLGAFSSC) and K1272 each bind ATP. The active-site Proton acceptor is the D1369. Phosphothreonine; by autocatalysis occurs at positions 1400 and 1412.

This sequence belongs to the protein kinase superfamily. STE Ser/Thr protein kinase family. MAP kinase kinase kinase subfamily. In terms of assembly, binds both upstream activators and downstream substrates in multimolecular complexes through its N-terminus. Oligomerizes after binding MAP2K4 or TRAF2. Interacts with AXIN1. Interacts (via the kinase catalytic domain) with STK38. Interacts with GRIPAP1. Mg(2+) serves as cofactor. Post-translationally, autophosphorylated.

The catalysed reaction is L-seryl-[protein] + ATP = O-phospho-L-seryl-[protein] + ADP + H(+). It carries out the reaction L-threonyl-[protein] + ATP = O-phospho-L-threonyl-[protein] + ADP + H(+). It catalyses the reaction S-ubiquitinyl-[E2 ubiquitin-conjugating enzyme]-L-cysteine + [acceptor protein]-L-lysine = [E2 ubiquitin-conjugating enzyme]-L-cysteine + N(6)-ubiquitinyl-[acceptor protein]-L-lysine.. With respect to regulation, activated by autophosphorylation on Thr-1400 and Thr-1412 following oligomerization. In terms of biological role, component of a protein kinase signal transduction cascade. Activates the ERK and JNK kinase pathways by phosphorylation of MAP2K1 and MAP2K4. May phosphorylate the MAPK8/JNK1 kinase. Activates CHUK and IKBKB, the central protein kinases of the NF-kappa-B pathway. This Homo sapiens (Human) protein is Mitogen-activated protein kinase kinase kinase 1 (MAP3K1).